A 249-amino-acid chain; its full sequence is Methylthioribulose-1-phosphate dehydratase (249 aa).

Histidine 103 and histidine 105 together coordinate Zn(2+).

It belongs to the aldolase class II family. MtnB subfamily. It depends on Zn(2+) as a cofactor.

It catalyses the reaction 5-(methylsulfanyl)-D-ribulose 1-phosphate = 5-methylsulfanyl-2,3-dioxopentyl phosphate + H2O. It functions in the pathway amino-acid biosynthesis; L-methionine biosynthesis via salvage pathway; L-methionine from S-methyl-5-thio-alpha-D-ribose 1-phosphate: step 2/6. Its function is as follows. Catalyzes the dehydration of methylthioribulose-1-phosphate (MTRu-1-P) into 2,3-diketo-5-methylthiopentyl-1-phosphate (DK-MTP-1-P). In Leptospira interrogans serogroup Icterohaemorrhagiae serovar copenhageni (strain Fiocruz L1-130), this protein is Methylthioribulose-1-phosphate dehydratase.